A 335-amino-acid polypeptide reads, in one-letter code: Trans-1,2-dihydrobenzene-1,2-diol dehydrogenase (335 aa).

It belongs to the Gfo/Idh/MocA family. Homodimer.

The catalysed reaction is (1R,2R)-1,2-dihydrobenzene-1,2-diol + NADP(+) = catechol + NADPH + H(+). The enzyme catalyses D-xylose + NADP(+) = D-xylono-1,5-lactone + NADPH + H(+). The sequence is that of Trans-1,2-dihydrobenzene-1,2-diol dehydrogenase (DHDH) from Bos taurus (Bovine).